The sequence spans 2193 residues: ATP-dependent helicase BRM (2193 aa).

Met-1 carries the post-translational modification N-acetylmethionine. Residues 1–10 (MQSGGSGGGP) are compositionally biased toward gly residues. Disordered stretches follow at residues 1-126 (MQSG…QEGQ), 175-231 (MQDL…PGNM), 293-466 (QKAG…GFTK), 511-558 (SPAI…DNVG), and 580-649 (TSTD…ASAR). Positions 23–62 (ASTSSAASPSSSSSSVQQQQQQQQQQQQQQQLASRQQQQQ) are enriched in low complexity. A coiled-coil region spans residues 38–58 (VQQQQQQQQQQQQQQQLASRQ). Gly residues predominate over residues 79–88 (GVQGMMGGGN). Composition is skewed to low complexity over residues 91–102 (SSPGSMQMPQQS), 110–126 (QQQQ…QEGQ), and 180–192 (PSSQ…SKPS). The segment covering 204–223 (ESSSQQRNETKSHPQQQVGT) has biased composition (polar residues). The segment covering 301–320 (ASQSPSIPISSQPASSSVVP) has biased composition (low complexity). Polar residues-rich tracts occupy residues 325–339 (PHAN…QSGS), 347–358 (STGSFASTSSPR), 383–412 (QPTN…STKK), and 421–433 (QMQQ…TPTP). Positions 445–463 (SNSSLQSGQGTQQAQQRSG) are enriched in low complexity. The QLQ domain occupies 463-499 (GFTKQQLHVLKAQILAFRRLKKGEGSLPPELLQAISP). Basic and acidic residues-rich tracts occupy residues 517–537 (VQDR…ECGK) and 611–621 (PRSDSTADKGK). Residues 626–638 (DGSQSKVPPQANS) show a composition bias toward polar residues. The Nuclear localization signal 1 motif lies at 705–712 (LKKINGLL). A coiled-coil region spans residues 726–795 (VLRLQIEEKK…QKAVREKQLK (70 aa)). A Helicase ATP-binding domain is found at 993–1158 (LSLYNNKLNG…WSLLNLLLPD (166 aa)). 1006–1013 (DEMGLGKT) is an ATP binding site. Residues 1109–1129 (DEAQRMKDRESVLARDLDRYR) adopt a coiled-coil conformation. The Helicase C-terminal domain maps to 1312 to 1489 (ILDRILIKLQ…QYKIDMADEV (178 aa)). 2 disordered regions span residues 1583 to 1775 (SKKP…DEEQ) and 1789 to 1894 (LRPR…NAGA). Over residues 1608–1617 (KRGRPKSKKI) the composition is skewed to basic residues. Residues 1618–1638 (NYKEIEDDIAGYSEESSEERN) are a coiled coil. A Phosphoserine modification is found at Ser-1641. Over residues 1642–1657 (GNEEEGDIRQFDDDEL) the composition is skewed to acidic residues. Basic and acidic residues predominate over residues 1821 to 1832 (TVVDSHSSRQDQ). Low complexity predominate over residues 1833-1842 (SDSSSRLRSV). 2 stretches are compositionally biased toward polar residues: residues 1848 to 1870 (ASTS…QLTV) and 1882 to 1892 (DGTSPISSSNA). The region spanning 1895–2005 (RMSHIIQKRC…NLFFDLLKMS (111 aa)) is the Bromo domain. A Nuclear localization signal 2 motif is present at residues 1901–1908 (QKRCKIVI). Polar residues predominate over residues 2022-2032 (GSAPTLVSTPT). A disordered region spans residues 2022-2193 (GSAPTLVSTP…DSGKRRPSHL (172 aa)). Ser-2137 is subject to Phosphoserine. The segment covering 2149–2166 (LAQQQRWPNQPTHPNNSG) has biased composition (polar residues).

This sequence belongs to the SNF2/RAD54 helicase family. As to quaternary structure, interacts with SWI3B, SWI3C, H3 and H4, but not with SWI3A, SWI3D or BSH. Interacts with LFY. Interacts with REF6. Binds to FGT1. Highly expressed in inflorescences and leaves. Low expression in siliques, roots and seedlings. Detected in shoot apical meristem, root meristem, vascular tissue of developing leaves, petals, stamens filaments, anthers and carpels.

The protein localises to the nucleus. The catalysed reaction is ATP + H2O = ADP + phosphate + H(+). ATPase subunit of a multiprotein complex equivalent of the SWI/SNF complex that acts by remodeling the chromatin by catalyzing an ATP-dependent alteration in the structure of nucleosomal DNA. Represses embryonic genes in leaves and controls shoot development and flowering. Activates flower homeotic genes. The association of BRM with its target genes requires REF6. Necessary to acquire heat stress (HS) memory, by globally binding to HS memory genes. This chain is ATP-dependent helicase BRM, found in Arabidopsis thaliana (Mouse-ear cress).